A 185-amino-acid chain; its full sequence is Calcium-binding protein K-like (185 aa).

2 EF-hand domains span residues 60 to 95 (WDEA…MTRA) and 96 to 131 (PTTD…VVVC). Asp-73, Asp-75, Asn-77, Glu-84, Asp-109, Asp-111, Ser-113, Tyr-115, and Glu-120 together coordinate Ca(2+).

It belongs to the recoverin family.

The protein is Calcium-binding protein K-like of Dictyostelium discoideum (Social amoeba).